The primary structure comprises 335 residues: Dihydroorotate dehydrogenase (quinone) (335 aa).

FMN is bound by residues 58 to 62 and threonine 82; that span reads AGADK. Lysine 62 contacts substrate. 107–111 contacts substrate; that stretch reads NRNGF. FMN-binding residues include asparagine 135 and asparagine 168. Asparagine 168 is a binding site for substrate. The active-site Nucleophile is serine 171. A substrate-binding site is contributed by asparagine 173. FMN is bound by residues lysine 213 and glycine 241. Residue 242–243 participates in substrate binding; sequence NT. FMN-binding positions include glycine 264, glycine 293, and 314–315; that span reads YS.

This sequence belongs to the dihydroorotate dehydrogenase family. Type 2 subfamily. Monomer. Requires FMN as cofactor.

It localises to the cell membrane. It catalyses the reaction (S)-dihydroorotate + a quinone = orotate + a quinol. It functions in the pathway pyrimidine metabolism; UMP biosynthesis via de novo pathway; orotate from (S)-dihydroorotate (quinone route): step 1/1. In terms of biological role, catalyzes the conversion of dihydroorotate to orotate with quinone as electron acceptor. The protein is Dihydroorotate dehydrogenase (quinone) of Actinobacillus pleuropneumoniae serotype 5b (strain L20).